We begin with the raw amino-acid sequence, 448 residues long: Phosphoglucosamine mutase (448 aa).

Ser-89 acts as the Phosphoserine intermediate in catalysis. Residues Ser-89, Asp-232, Asp-234, and Asp-236 each coordinate Mg(2+). Residue Ser-89 is modified to Phosphoserine.

Belongs to the phosphohexose mutase family. Forms large aggregates. It depends on Mg(2+) as a cofactor. In terms of processing, activated by phosphorylation.

It catalyses the reaction alpha-D-glucosamine 1-phosphate = D-glucosamine 6-phosphate. In terms of biological role, catalyzes the conversion of glucosamine-6-phosphate to glucosamine-1-phosphate. The sequence is that of Phosphoglucosamine mutase (glmM) from Methanocaldococcus jannaschii (strain ATCC 43067 / DSM 2661 / JAL-1 / JCM 10045 / NBRC 100440) (Methanococcus jannaschii).